A 374-amino-acid polypeptide reads, in one-letter code: Probable inactive patatin-3-Kuras 1 (374 aa).

The N-terminal stretch at 1-11 (MMLATTSSTFA) is a signal peptide. One can recognise a PNPLA domain in the interval 20 to 217 (LSIDGGGIKG…AAVDPSLLSI (198 aa)). The GXGXXG motif lies at 24 to 29 (GGGIKG). N-linked (GlcNAc...) asparagine glycans are attached at residues Asn-48 and Asn-191. Asp-204 (proton acceptor) is an active-site residue. Asn-257 carries N-linked (GlcNAc...) asparagine glycosylation.

This sequence belongs to the patatin family. In terms of processing, N-glycosylated. Tuber.

The protein resides in the vacuole. The chain is Probable inactive patatin-3-Kuras 1 (pat3-k1) from Solanum tuberosum (Potato).